Reading from the N-terminus, the 205-residue chain is Large ribosomal subunit protein uL4 (205 aa).

Residues 43-77 (RRRSGTASTKGRSDVAGSRAKLFRQKGTGRARRGD) are disordered. Over residues 63-73 (KLFRQKGTGRA) the composition is skewed to basic residues.

This sequence belongs to the universal ribosomal protein uL4 family. As to quaternary structure, part of the 50S ribosomal subunit.

Its function is as follows. One of the primary rRNA binding proteins, this protein initially binds near the 5'-end of the 23S rRNA. It is important during the early stages of 50S assembly. It makes multiple contacts with different domains of the 23S rRNA in the assembled 50S subunit and ribosome. Forms part of the polypeptide exit tunnel. In Desulfosudis oleivorans (strain DSM 6200 / JCM 39069 / Hxd3) (Desulfococcus oleovorans), this protein is Large ribosomal subunit protein uL4.